Here is a 400-residue protein sequence, read N- to C-terminus: Diphosphomevalonate decarboxylase (400 aa).

(R)-5-diphosphomevalonate contacts are provided by residues 25-28 (YWGK), arginine 80, 155-160 (SGSACR), and threonine 211.

The protein belongs to the diphosphomevalonate decarboxylase family. In terms of assembly, homodimer.

The protein resides in the cytoplasm. It catalyses the reaction (R)-5-diphosphomevalonate + ATP = isopentenyl diphosphate + ADP + phosphate + CO2. It functions in the pathway steroid biosynthesis; cholesterol biosynthesis. Its function is as follows. Catalyzes the ATP dependent decarboxylation of (R)-5-diphosphomevalonate to form isopentenyl diphosphate (IPP). Functions in the mevalonate (MVA) pathway leading to isopentenyl diphosphate (IPP), a key precursor for the biosynthesis of isoprenoids and sterol synthesis. The protein is Diphosphomevalonate decarboxylase (mvd) of Danio rerio (Zebrafish).